Here is a 701-residue protein sequence, read N- to C-terminus: Polyribonucleotide nucleotidyltransferase (701 aa).

Positions 483 and 489 each coordinate Mg(2+). One can recognise a KH domain in the interval 550-609; that stretch reads PRIYTLHIPTDKIRDVIGPGGKVIRGIIEQTGVKIDVEDDGTIHVASADEASANKAIQII. Residues 619-686 form the S1 motif domain; that stretch reads GKTYLGKVVR…EGNKIKLSRK (68 aa).

Belongs to the polyribonucleotide nucleotidyltransferase family. Mg(2+) is required as a cofactor.

Its subcellular location is the cytoplasm. The enzyme catalyses RNA(n+1) + phosphate = RNA(n) + a ribonucleoside 5'-diphosphate. Its function is as follows. Involved in mRNA degradation. Catalyzes the phosphorolysis of single-stranded polyribonucleotides processively in the 3'- to 5'-direction. In Solibacter usitatus (strain Ellin6076), this protein is Polyribonucleotide nucleotidyltransferase.